The sequence spans 137 residues: Methylglyoxal synthase (137 aa).

The MGS-like domain maps to methionine 1–valine 137. Residues histidine 8, lysine 12, threonine 34–threonine 37, and serine 54–glycine 55 contribute to the substrate site. Aspartate 60 functions as the Proton donor/acceptor in the catalytic mechanism. Histidine 87 lines the substrate pocket.

It belongs to the methylglyoxal synthase family.

The enzyme catalyses dihydroxyacetone phosphate = methylglyoxal + phosphate. Catalyzes the formation of methylglyoxal from dihydroxyacetone phosphate. In Bacillus subtilis (strain 168), this protein is Methylglyoxal synthase.